Consider the following 357-residue polypeptide: Probable dual-specificity RNA methyltransferase RlmN (357 aa).

Catalysis depends on glutamate 92, which acts as the Proton acceptor. The Radical SAM core domain occupies 98–330 (QEYGLSVCVT…KKNGINCVIR (233 aa)). A disulfide bridge links cysteine 105 with cysteine 341. [4Fe-4S] cluster is bound by residues cysteine 112, cysteine 116, and cysteine 119. Residues 164-165 (GE), serine 196, 219-221 (SLH), and asparagine 297 contribute to the S-adenosyl-L-methionine site. The S-methylcysteine intermediate role is filled by cysteine 341.

It belongs to the radical SAM superfamily. RlmN family. [4Fe-4S] cluster is required as a cofactor.

It is found in the cytoplasm. It catalyses the reaction adenosine(2503) in 23S rRNA + 2 reduced [2Fe-2S]-[ferredoxin] + 2 S-adenosyl-L-methionine = 2-methyladenosine(2503) in 23S rRNA + 5'-deoxyadenosine + L-methionine + 2 oxidized [2Fe-2S]-[ferredoxin] + S-adenosyl-L-homocysteine. The enzyme catalyses adenosine(37) in tRNA + 2 reduced [2Fe-2S]-[ferredoxin] + 2 S-adenosyl-L-methionine = 2-methyladenosine(37) in tRNA + 5'-deoxyadenosine + L-methionine + 2 oxidized [2Fe-2S]-[ferredoxin] + S-adenosyl-L-homocysteine. Specifically methylates position 2 of adenine 2503 in 23S rRNA and position 2 of adenine 37 in tRNAs. The polypeptide is Probable dual-specificity RNA methyltransferase RlmN (Enterococcus faecalis (strain ATCC 700802 / V583)).